The primary structure comprises 158 residues: Transcription elongation factor GreB (158 aa).

This sequence belongs to the GreA/GreB family. GreB subfamily.

In terms of biological role, necessary for efficient RNA polymerase transcription elongation past template-encoded arresting sites. The arresting sites in DNA have the property of trapping a certain fraction of elongating RNA polymerases that pass through, resulting in locked ternary complexes. Cleavage of the nascent transcript by cleavage factors such as GreA or GreB allows the resumption of elongation from the new 3'terminus. GreB releases sequences of up to 9 nucleotides in length. The sequence is that of Transcription elongation factor GreB from Escherichia coli O157:H7.